The following is a 118-amino-acid chain: ATP synthase subunit c (118 aa).

2 helical membrane passes run 34–54 (AIFAVGAMIGAGIAIGVGAVG) and 88–108 (MAMAESIAIYALVVSLVLIFA).

It belongs to the ATPase C chain family. As to quaternary structure, F-type ATPases have 2 components, F(1) - the catalytic core - and F(0) - the membrane proton channel. F(1) has five subunits: alpha(3), beta(3), gamma(1), delta(1), epsilon(1). F(0) has three main subunits: a(1), b(2) and c(10-14). The alpha and beta chains form an alternating ring which encloses part of the gamma chain. F(1) is attached to F(0) by a central stalk formed by the gamma and epsilon chains, while a peripheral stalk is formed by the delta and b chains.

It localises to the cell inner membrane. F(1)F(0) ATP synthase produces ATP from ADP in the presence of a proton or sodium gradient. F-type ATPases consist of two structural domains, F(1) containing the extramembraneous catalytic core and F(0) containing the membrane proton channel, linked together by a central stalk and a peripheral stalk. During catalysis, ATP synthesis in the catalytic domain of F(1) is coupled via a rotary mechanism of the central stalk subunits to proton translocation. Its function is as follows. Key component of the F(0) channel; it plays a direct role in translocation across the membrane. A homomeric c-ring of between 10-14 subunits forms the central stalk rotor element with the F(1) delta and epsilon subunits. The sequence is that of ATP synthase subunit c from Syntrophus aciditrophicus (strain SB).